The chain runs to 347 residues: MAEGSEKVPIARAGPEDVEQGLPPAYTAAVPPPGPGRLLKAGATVLIAGALLLLAGAIGAFYFWKATERQVYNVHYTMSINGKVQDGSMEIDAGNNLETFKTGSGSEEAVEVHDFQIGITGIRFAGGEKCYIKAQPKARVPEVDAMTKASLSSDLEDEIMPVRFDENSLIWVAADEPIKHNGFLSPKILELCGDLPIFWLRPTYPKDKQRERREMKRNKRQSESNFDAEHRAAAAEEVNTRSTPTQLTQDLGPQSNETRPMQQESDQTLNPDNPYNQLEGEGMAFDPMLDHLGVCCIECRRSYTQCQRICEPLLGYYPWPYNYQGCRTACRIIMPCSWWVARIMGVV.

The interval 1 to 29 (MAEGSEKVPIARAGPEDVEQGLPPAYTAA) is disordered. The chain crosses the membrane as a helical span at residues 45-65 (VLIAGALLLLAGAIGAFYFWK). The 98-residue stretch at 103–200 (GSGSEEAVEV…LCGDLPIFWL (98 aa)) folds into the BRICHOS domain. Cysteine 130 and cysteine 192 are oxidised to a cystine. The disordered stretch occupies residues 208–281 (KQRERREMKR…DNPYNQLEGE (74 aa)). The propeptide occupies 210 to 213 (RERR). Residues 240-276 (TRSTPTQLTQDLGPQSNETRPMQQESDQTLNPDNPYN) are compositionally biased toward polar residues. An N-linked (GlcNAc...) asparagine glycan is attached at asparagine 256. 4 disulfide bridges follow: cysteine 295–cysteine 299, cysteine 296–cysteine 336, cysteine 306–cysteine 330, and cysteine 310–cysteine 326.

This sequence belongs to the chondromodulin-1 family. In terms of processing, after cleavage, the post-translationally modified ChM-I is secreted as a glycoprotein. In terms of tissue distribution, expressed in the cartilage and in fetal precartilaginous tissues as well as in heart and eye.

Its subcellular location is the secreted. The protein resides in the extracellular space. The protein localises to the extracellular matrix. It localises to the endomembrane system. In terms of biological role, bifunctional growth regulator. May contribute to the rapid growth of cartilage and vascular invasion prior to the replacement of cartilage by bone during endochondral bone development. Plays a role as antiangiogenic factor in cardiac valves to suppress neovascularization. The polypeptide is Leukocyte cell-derived chemotaxin 1 (Gallus gallus (Chicken)).